The sequence spans 417 residues: MDIVVLGGGVVGVTSAWYLAKAGHKVTLLERRDGVALETSHANAGQISPGYAAPWAAPGIPLKAAKWLLQKHAPFTVRPTSDPFQLRWMLKMFANCTPAAYATNKGRMVRLAEYSRDCMKTLRDELALDYEGRQLGTLQLFRSQAQLDASKRDIEVLEEYGVPYQSLDASGCEGVEPALARVRGKIVGGLRLPGDETGDCFRFTKALAAEAQKLGVEFVFNCAIDEIELSLGRAVAVRAGEQRFKADAIVCALGSYATGFLRPLGIDLPVYPVKGYSLTLPMTDADAVPRSTVLDETYKVAITRFNERIRVGGMAELSGFNLALNPKRYDTLAMVVGDLFPEGGDISRAEFWTGLRPMTPDGTPLVGPSPVPGLWLNTGHGTLGWTMAAGSGQLLSDLISGSSTAISDEGLTLARYG.

FAD is bound at residue 3 to 17; it reads IVVLGGGVVGVTSAW.

It belongs to the DadA oxidoreductase family. FAD serves as cofactor.

The catalysed reaction is a D-alpha-amino acid + A + H2O = a 2-oxocarboxylate + AH2 + NH4(+). It participates in amino-acid degradation; D-alanine degradation; NH(3) and pyruvate from D-alanine: step 1/1. Its function is as follows. Oxidative deamination of D-amino acids. This is D-amino acid dehydrogenase from Aeromonas salmonicida (strain A449).